The following is a 697-amino-acid chain: Large T antigen (697 aa).

An N-acetylmethionine; by host modification is found at methionine 1. A J domain is found at 12–75; sequence ELMDLLQITR…LMEIRSQCGS (64 aa). Residues 131–135 are binding to host RB1 protein and transforming activity; that stretch reads LFCSE. Serine 134 and serine 140 each carry phosphoserine; by host. Residues 136–198 are disordered; sequence TMSSSSDEDT…PKRKKTEEKK (63 aa). The span at 148–158 shows a compositional bias: pro residues; sequence AAQPPPPPAPS. Residues 159–169 show a composition bias toward acidic residues; sequence PEEEDEIEFVE. Residues 170–183 show a composition bias toward low complexity; it reads ETPSSCDGSSSQSS. Phosphothreonine; by host is present on threonine 187. Residues 188-196 carry the Nuclear localization signal motif; sequence PPKRKKTEE. The segment at residues 203 to 323 is a DNA-binding region (T-ag OBD); it reads PVCLYSFLSH…EENKPGVSMF (121 aa). Residues 330 to 422 form a T-ag D1-type zinc finger; sequence EQSVNWQEIC…KRLKLVECSR (93 aa). The Zn(2+) site is built by cysteine 367, cysteine 370, histidine 378, and histidine 382. The SF3 helicase domain occupies 463–623; the sequence is NSWDVFQNIL…AYLKQSLEKS (161 aa). 489–496 contributes to the ATP binding site; that stretch reads GPINSGKT.

In terms of assembly, forms homohexamers in the presence of ATP. Interacts with host HDAC1. Interacts (via LXCXE domain) with host RB1; the interaction induces the aberrant dissociation of RB1-E2F1 complex thereby disrupting RB1's activity. Interacts (via LXCXE domain) with host pRB-related proteins RBL1 and RBL2. Interacts (via C-terminus) with host TOP1 and POLA1 allowing DNA replication. Interacts with host TP53, inhibiting TP53 binding to DNA. Interacts with host preinitiation complex components TBP, TFIIA and TFIID to regulate transcription initiation. Mg(2+) serves as cofactor. Post-translationally, phosphorylated on both serine and threonine residues. Small t antigen inhibits the dephosphorylation by the AC form of PP2A. O-Glycosylated near the C-terminal region. In terms of processing, acetylated by CBP in a TP53-dependent manner.

It localises to the host nucleus. The enzyme catalyses Couples ATP hydrolysis with the unwinding of duplex DNA by translocating in the 3'-5' direction.. It catalyses the reaction ATP + H2O = ADP + phosphate + H(+). Functionally, isoform large T antigen is a key early protein essential for both driving viral replication and inducing cellular transformation. Plays a role in viral genome replication by driving entry of quiescent cells into the cell cycle and by autoregulating the synthesis of viral early mRNA. Displays highly oncogenic activities by corrupting the host cellular checkpoint mechanisms that guard cell division and the transcription, replication, and repair of DNA. Participates in the modulation of cellular gene expression preceeding viral DNA replication. This step involves binding to host key cell cycle regulators retinoblastoma protein RB1/pRb and TP53. Induces the disassembly of host E2F1 transcription factors from RB1, thus promoting transcriptional activation of E2F1-regulated S-phase genes. Inhibits host TP53 binding to DNA, abrogating the ability of TP53 to stimulate gene expression. Plays the role of a TFIID-associated factor (TAF) in transcription initiation for all three RNA polymerases, by stabilizing the TBP-TFIIA complex on promoters. Initiates viral DNA replication and unwinding via interactions with the viral origin of replication. Binds two adjacent sites in the SV40 origin. The replication fork movement is facilitated by Large T antigen helicase activity. Has processive 3'-5' DNA helicase activity which requires a short 3' single-stranded region and ATP. Activates the transcription of viral late mRNA, through host TBP and TFIIA stabilization. Interferes with histone deacetylation mediated by HDAC1, leading to activation of transcription. In Chlorocebus aethiops (Green monkey), this protein is Large T antigen.